We begin with the raw amino-acid sequence, 62 residues long: Single-pass membrane and coiled-coil domain-containing protein 4 homolog (62 aa).

The disordered stretch occupies residues Met1–His27. Residues Ala9–Val31 adopt a coiled-coil conformation. Residues Val30 to Tyr50 traverse the membrane as a helical segment.

The protein belongs to the SMCO4 family.

It localises to the membrane. This Nematostella vectensis (Starlet sea anemone) protein is Single-pass membrane and coiled-coil domain-containing protein 4 homolog.